The sequence spans 309 residues: Aspartate carbamoyltransferase catalytic subunit (309 aa).

2 residues coordinate carbamoyl phosphate: R55 and T56. K85 serves as a coordination point for L-aspartate. Carbamoyl phosphate is bound by residues R106, H135, and Q138. R168 and R230 together coordinate L-aspartate. The carbamoyl phosphate site is built by L268 and P269.

The protein belongs to the aspartate/ornithine carbamoyltransferase superfamily. ATCase family. As to quaternary structure, heterododecamer (2C3:3R2) of six catalytic PyrB chains organized as two trimers (C3), and six regulatory PyrI chains organized as three dimers (R2).

The enzyme catalyses carbamoyl phosphate + L-aspartate = N-carbamoyl-L-aspartate + phosphate + H(+). Its pathway is pyrimidine metabolism; UMP biosynthesis via de novo pathway; (S)-dihydroorotate from bicarbonate: step 2/3. Functionally, catalyzes the condensation of carbamoyl phosphate and aspartate to form carbamoyl aspartate and inorganic phosphate, the committed step in the de novo pyrimidine nucleotide biosynthesis pathway. The chain is Aspartate carbamoyltransferase catalytic subunit from Vibrio campbellii (strain ATCC BAA-1116).